The chain runs to 88 residues: Small ribosomal subunit protein uS17 (88 aa).

This sequence belongs to the universal ribosomal protein uS17 family. As to quaternary structure, part of the 30S ribosomal subunit.

Its function is as follows. One of the primary rRNA binding proteins, it binds specifically to the 5'-end of 16S ribosomal RNA. The protein is Small ribosomal subunit protein uS17 of Prochlorococcus marinus (strain NATL1A).